The chain runs to 215 residues: Sodium channel regulatory subunit beta-3 (215 aa).

A signal peptide spans 1 to 24 (MPAFNRLLPLASLVLIYWVRVCFP). An Ig-like C2-type domain is found at 25–138 (VCVEVPSETE…EAHRPFVKTT (114 aa)). The Extracellular segment spans residues 25 to 156 (VCVEVPSETE…EEAGEDFTSV (132 aa)). Disulfide bonds link C26–C48 and C45–C120. 4 N-linked (GlcNAc...) asparagine glycosylation sites follow: N95, N109, N113, and N121. Residues 157-178 (VSEIMMYILLVFLTLWLFIEMI) form a helical membrane-spanning segment. The Cytoplasmic portion of the chain corresponds to 179–215 (YCYRKVSKAEEAAQENASDYLAIPSENKENSVVPVEE).

This sequence belongs to the sodium channel auxiliary subunit SCN3B (TC 8.A.17) family. A voltage-gated sodium (Nav) channel consists of an ion-conducting pore-forming alpha subunit functional on its own that is regulated by one or more beta subunits. Forms homodimers and homotrimers. SCN3B is non-covalently associated with alpha subunits and induces the formation of alpha subunit oligomers, including trimers. Interacts with SCN5A/Nav1.5; regulatory subunit of SCN5A/Nav1.5. Interacts with SCN7A/Nav2.1; probable regulatory subunit of SCN7A/Nav2.1. Interacts with SCN10A; regulatory subunit of SCN10A/Nav1.8. Interacts with NFASC; probably involved in targeting the sodium channels to the nodes of Ranvier. In terms of processing, intramolecular disulfide bonds favor the voltage-gated sodium channel oligomeric complex assembly. Post-translationally, N-glycosylated. As to expression, expressed broadly in neurons in the central and peripheral nervous systems, but not in glia and most non-neuronal cells. Weak detection in lung and adrenal gland.

Its subcellular location is the cell membrane. Regulatory subunit of multiple voltage-gated sodium (Nav) channels directly mediating the depolarization of excitable membranes. Navs, also called VGSCs (voltage-gated sodium channels) or VDSCs (voltage-dependent sodium channels), operate by switching between closed and open conformations depending on the voltage difference across the membrane. In the open conformation they allow Na(+) ions to selectively pass through the pore, along their electrochemical gradient. The influx of Na+ ions provokes membrane depolarization, initiating the propagation of electrical signals throughout cells and tissues. The accessory beta subunits participate in localization and functional modulation of the Nav channels. Voltage-gated sodium channels regulatory subunit that modulates channel gating kinetics. Modulates the activity of SCN2A/Nav1.2, causing a hyperpolarizing shift in the voltage-dependence of inactivation and increasing the fraction of channels operating in the fast gating mode. Also able to induce unique persistent SCN2A/Nav1.2-mediated sodium currents. Could modulate the activity of SCN10A/Nav1.8. The chain is Sodium channel regulatory subunit beta-3 from Rattus norvegicus (Rat).